Consider the following 336-residue polypeptide: MTPNDAKRPLQLNDQGRLRHFLSLDGLSRELLTEILDTADSFLEVGTRAVKKVPLLRGRTVCNVFFENSTRTRTTFEMAAQRLSADVITLNVSTSSTSKGETLFDTLRNLEAMAADMFVIRHADSGAAHFIAEHVCPDVAVINGGDGRHAHPTQGMLDMLTIRRHKGGFENLSVAIVGDILHSRVARSDMLALRALGCPDIRVIGPKTLLPMGLEQYGVRVFHDLDEGLRDVDVVIMLRLQRERMQGGLLPSQGEFYRLYGLSTARLARARPDAIVMHPGPINRGVEIESAVADGAQSVILNQVTYGIAVRMAVLSMAMSGQTAQRQLNSESEEQI.

R71 and T72 together coordinate carbamoyl phosphate. Position 99 (K99) interacts with L-aspartate. Carbamoyl phosphate contacts are provided by R121, H151, and Q154. L-aspartate-binding residues include R184 and R239. Residues G280 and P281 each coordinate carbamoyl phosphate.

This sequence belongs to the aspartate/ornithine carbamoyltransferase superfamily. ATCase family. Heterododecamer (2C3:3R2) of six catalytic PyrB chains organized as two trimers (C3), and six regulatory PyrI chains organized as three dimers (R2).

It catalyses the reaction carbamoyl phosphate + L-aspartate = N-carbamoyl-L-aspartate + phosphate + H(+). Its pathway is pyrimidine metabolism; UMP biosynthesis via de novo pathway; (S)-dihydroorotate from bicarbonate: step 2/3. Functionally, catalyzes the condensation of carbamoyl phosphate and aspartate to form carbamoyl aspartate and inorganic phosphate, the committed step in the de novo pyrimidine nucleotide biosynthesis pathway. In Azotobacter vinelandii (strain DJ / ATCC BAA-1303), this protein is Aspartate carbamoyltransferase catalytic subunit.